We begin with the raw amino-acid sequence, 629 residues long: Hemocyanin F chain (629 aa).

Positions 172, 176, 203, 324, 328, and 364 each coordinate Cu cation. Residues Asn395 and Asn447 are each glycosylated (N-linked (GlcNAc...) asparagine). The segment covering 503–513 has biased composition (polar residues); sequence SESSVTVSHTP. Residues 503 to 522 form a disordered region; sequence SESSVTVSHTPTFEELQRGE. An N-linked (GlcNAc...) asparagine glycan is attached at Asn527. Residues Cys534 and Cys582 are joined by a disulfide bond. N-linked (GlcNAc...) asparagine glycosylation is present at Asn615.

It belongs to the tyrosinase family. Hemocyanin subfamily. In terms of assembly, tarantula hemocyanin is a 24-chain polymer with seven different chains identified. As to expression, hemolymph.

It localises to the secreted. The protein localises to the extracellular space. Its function is as follows. Hemocyanins are copper-containing oxygen carriers occurring freely dissolved in the hemolymph of many mollusks and arthropods. The chain is Hemocyanin F chain (HCF) from Aphonopelma sp. (American tarantula).